Reading from the N-terminus, the 625-residue chain is MSLSEQYEEKVRPCIDLIDSLRALGVEKDLALPAIAVIGDQSSGKSSVLEALSGVALPRGSGIVTRCPLELKMKKSRKADFWHGKIKYEDYEEEIEDPADVEQMIRKAQNEIAGTGMGISDKLISLEVTSSNVPDLTVIDLPGITRVAVKDQPENIGDQSKRLIKKFITKQETINLVVVPCNVDIATTEALKMALEVDPNGERTFGVLTKPDLVDKGSEETVVSIINNEIVYLNKGYIIVRCRGQQEIKDRVSLNETVKRERDFFEDHPHFRTLYDNRKATIPNLAEKLTLELVFHIGRCLPRLEERIQVKLSETQAELDRYGSGTPTEPEQRIYFLTDKITAFIQDVLNLTTGEEVKSMLYMNIFPDLRKQFDLWKNDLDSVGETFNKKIEKEMKAYEEKYRGRELPGFLKYNTFEVIVKGQIKQLEEPAIRRLKEISDLIKREFSQLAHSNFPGFPNILKMAKTKIDNIKQVKESETESILRTQFKMEMMIYTQDKTHHDNLKMLKSKEEGKERQKLGVAHSPSHKLYDHSDSEGIREELTCHLKSYFSIVTKRLADQVPMVIRYMMLQESAAQLQREMIQLIQDRHNIEELLKEDHDIASKRNNLHSCQKRLTEALKYLAKF.

Residues 29–302 (DLALPAIAVI…LVFHIGRCLP (274 aa)) enclose the Dynamin-type G domain. The tract at residues 39–46 (GDQSSGKS) is G1 motif. 39-46 (GDQSSGKS) lines the GTP pocket. Positions 64–66 (VTR) are G2 motif. Residues 140–143 (DLPG) form a G3 motif region. GTP contacts are provided by residues 140–144 (DLPGI) and 209–212 (TKPD). The segment at 209 to 212 (TKPD) is G4 motif. The segment at 241-244 (RCRG) is G5 motif. Residues 539–625 (REELTCHLKS…TEALKYLAKF (87 aa)) form the GED domain.

This sequence belongs to the TRAFAC class dynamin-like GTPase superfamily. Dynamin/Fzo/YdjA family.

It localises to the cytoplasm. This chain is Interferon-induced GTP-binding protein Mx2 (mx2), found in Ictalurus punctatus (Channel catfish).